We begin with the raw amino-acid sequence, 174 residues long: Magnetosome protein MamT (174 aa).

At 1–9 the chain is on the cytoplasmic side; it reads MGTPGGGRR. The chain crosses the membrane as a helical span at residues 10 to 28; that stretch reads WMTLISITLLMVVGLGLYW. The Lumenal portion of the chain corresponds to 29-174; the sequence is DELSLSAGIS…EKKSGIKWLL (146 aa). The short motif at 87–107 is the MCR (magnetochrome) 1 element; sequence VMPGTGMPHPYVGDCIQCHLM. The heme site is built by Cys101, Cys104, His105, Cys152, Cys155, and His156. Positions 138–158 match the MCR 2 motif; sequence ILPTTRQPHPPAGRCIKCHDI.

This sequence belongs to the magnetosome MamT family. Heme serves as cofactor.

The protein resides in the magnetosome membrane. Its function is as follows. May play a role in magnetite crystal maturation. May transfer electrons to balance the Fe(2+)-Fe(3+) ratio during magnetite formation. In Magnetospirillum gryphiswaldense (strain DSM 6361 / JCM 21280 / NBRC 15271 / MSR-1), this protein is Magnetosome protein MamT.